We begin with the raw amino-acid sequence, 560 residues long: MLSRLSERCTIATGLEQVLRHYVWSAAWLRDAEPAAAASENIDLSGLMERAGRAAYDVFANLYTSQKHWLILVGSGNNGGDGYVIARHAREAGKIVTVLRMPHSKPLPTEAASAQHAWKAVGGTESTMSPGAPLQLPADVDLIVDGLLGTGICGPPREQYADVIRHINGLPVPRVAIDIPSGLNAETGEAAGACVKADHTATFICLKPGLLTGQAKDYVGQLHYRSLGLEDWMTAPERMRVALCRRVALDDVYEYFGIRRSALAHKGSCGKAILVGGDHGFGGAALMSAEACVTVGAGLTRVLTRPEYAAPLLTRCPEAMVTAVETDTGEQLKQQMLEAFEWASTLAVGPGLGTGAYGQAALTAALRHAELHQDKTLVLDADALNLLAGCLHGREGGAAAGARKHLPVLPNSIITPHPGEAARLLDCRVADVEKDRLAAARRLAAILGGTCLLKGPGTIVHCHSSAKTAIVDAGNAGMASGGMGDVLTGLLAGLAAQRMHDTFDTTCAGALVHGVAADMVAAEDGRGTRGIRATELIHRVPLIVNASGPSPASRQRPSGQ.

Residues methionine 1 to valine 241 are NAD(P)H-hydrate epimerase. Residues leucine 29–alanine 235 form the YjeF N-terminal domain. Residues asparagine 77–aspartate 81 form an NADPHX 1; for epimerase activity region. K(+) contacts are provided by asparagine 78 and aspartate 145. The tract at residues glycine 149–proline 155 is NADPHX 1; for epimerase activity. The (6S)-NADPHX site is built by tyrosine 160 and aspartate 178. Serine 181 contacts K(+). Positions leucine 249–serine 547 constitute a YjeF C-terminal domain. The interval leucine 249–glutamine 560 is ADP-dependent (S)-NAD(P)H-hydrate dehydratase. Glycine 351 contacts (6S)-NADPHX. The interval histidine 417–arginine 423 is NADPHX 2; for dehydratase activity. ADP-binding positions include lysine 454–threonine 458 and asparagine 475–glycine 484. A (6S)-NADPHX-binding site is contributed by aspartate 485.

It in the N-terminal section; belongs to the NnrE/AIBP family. In the C-terminal section; belongs to the NnrD/CARKD family. K(+) serves as cofactor.

It catalyses the reaction (6S)-NADHX + ADP = AMP + phosphate + NADH + H(+). The enzyme catalyses (6S)-NADPHX + ADP = AMP + phosphate + NADPH + H(+). It carries out the reaction (6R)-NADHX = (6S)-NADHX. The catalysed reaction is (6R)-NADPHX = (6S)-NADPHX. Its function is as follows. Bifunctional enzyme that catalyzes the epimerization of the S- and R-forms of NAD(P)HX and the dehydration of the S-form of NAD(P)HX at the expense of ADP, which is converted to AMP. This allows the repair of both epimers of NAD(P)HX, a damaged form of NAD(P)H that is a result of enzymatic or heat-dependent hydration. This chain is Bifunctional NAD(P)H-hydrate repair enzyme, found in Leishmania major.